A 469-amino-acid polypeptide reads, in one-letter code: Ribulose bisphosphate carboxylase large chain (469 aa).

Lysine 5 is modified (N6,N6,N6-trimethyllysine). Residues asparagine 114 and threonine 164 each contribute to the substrate site. Catalysis depends on lysine 166, which acts as the Proton acceptor. Lysine 168 provides a ligand contact to substrate. Positions 192, 194, and 195 each coordinate Mg(2+). Residue lysine 192 is modified to N6-carboxylysine. The active-site Proton acceptor is histidine 285. Residues arginine 286, histidine 318, and serine 370 each contribute to the substrate site.

The protein belongs to the RuBisCO large chain family. Type I subfamily. As to quaternary structure, heterohexadecamer of 8 large chains and 8 small chains; disulfide-linked. The disulfide link is formed within the large subunit homodimers. It depends on Mg(2+) as a cofactor. Post-translationally, the disulfide bond which can form in the large chain dimeric partners within the hexadecamer appears to be associated with oxidative stress and protein turnover.

It is found in the plastid. Its subcellular location is the chloroplast. It catalyses the reaction 2 (2R)-3-phosphoglycerate + 2 H(+) = D-ribulose 1,5-bisphosphate + CO2 + H2O. The catalysed reaction is D-ribulose 1,5-bisphosphate + O2 = 2-phosphoglycolate + (2R)-3-phosphoglycerate + 2 H(+). In terms of biological role, ruBisCO catalyzes two reactions: the carboxylation of D-ribulose 1,5-bisphosphate, the primary event in carbon dioxide fixation, as well as the oxidative fragmentation of the pentose substrate in the photorespiration process. Both reactions occur simultaneously and in competition at the same active site. The sequence is that of Ribulose bisphosphate carboxylase large chain from Antirhea lucida (Palo iloron).